The primary structure comprises 608 residues: UvrABC system protein C (608 aa).

One can recognise a GIY-YIG domain in the interval 13–91 (HDPGVYRMFD…IKTFQPRYNV (79 aa)). Residues 201–236 (QQVLDHLIGKMERASRALNFEEAARYRDQIQAVRSV) form the UVR domain.

This sequence belongs to the UvrC family. Interacts with UvrB in an incision complex.

It is found in the cytoplasm. Functionally, the UvrABC repair system catalyzes the recognition and processing of DNA lesions. UvrC both incises the 5' and 3' sides of the lesion. The N-terminal half is responsible for the 3' incision and the C-terminal half is responsible for the 5' incision. This is UvrABC system protein C from Mannheimia succiniciproducens (strain KCTC 0769BP / MBEL55E).